Consider the following 268-residue polypeptide: Homeobox protein Hox-C4a (268 aa).

Positions 70–129 (PEPDTQRGHGLPHAGHLLGKGQSASCEPPPLPLSPATPSAASSACNQATPEHPNSSASAK) are disordered. Low complexity-rich tracts occupy residues 77 to 95 (GHGLPHAGHLLGKGQSASC) and 105 to 114 (ATPSAASSAC). Positions 115–128 (NQATPEHPNSSASA) are enriched in polar residues. The Antp-type hexapeptide signature appears at 133–138 (VYPWMK). The homeobox DNA-binding region spans 154–213 (PKRSRTAYTRQQVLELEKEFHYNRYLTRRRRIEIAHSLVLSERQIKIWFQNRRMKWKKDH). The interval 212–268 (DHRLPNTKVRSSSSTGISSGSNTSSAAGVVAAASTTNTMSASEDLSGTERGEDITRL) is disordered. A compositionally biased stretch (low complexity) spans 222–253 (SSSSTGISSGSNTSSAAGVVAAASTTNTMSAS). The segment covering 258 to 268 (GTERGEDITRL) has biased composition (basic and acidic residues).

Belongs to the Antp homeobox family. Deformed subfamily.

It is found in the nucleus. Functionally, sequence-specific transcription factor which is part of a developmental regulatory system that provides cells with specific positional identities on the anterior-posterior axis. This chain is Homeobox protein Hox-C4a (hoxc4a), found in Danio rerio (Zebrafish).